Consider the following 286-residue polypeptide: Type II restriction enzyme NgoMIV (286 aa).

Residues Asp-140 and Cys-186 each coordinate Mg(2+).

In terms of assembly, homotetramer. Requires Mg(2+) as cofactor.

The enzyme catalyses Endonucleolytic cleavage of DNA to give specific double-stranded fragments with terminal 5'-phosphates.. A P subtype restriction enzyme that recognizes the double-stranded sequence 5'-GCCGGC-3' and cleaves after G-1. This chain is Type II restriction enzyme NgoMIV (ngoMIVR), found in Neisseria gonorrhoeae.